The chain runs to 427 residues: Inward rectifier potassium channel 2 (427 aa).

Topologically, residues 1 to 81 (MGSVRTNRYS…IFTTCVDIRW (81 aa)) are cytoplasmic. C76 bears the S-nitrosocysteine mark. Residues 82 to 106 (RWMLVIFCLAFVLSWLFFGCVFWLI) traverse the membrane as a helical segment. Residues 107-128 (ALLHGDLDASKESKACVSEVNS) are Extracellular-facing. The segment at residues 129–140 (FTAAFLFSIETQ) is an intramembrane region (helical; Pore-forming). An intramembrane region (pore-forming) is located at residues 141 to 147 (TTIGYGF). The Selectivity filter signature appears at 142-147 (TIGYGF). Topologically, residues 148–156 (RCVTDECPI) are extracellular. A helical membrane pass occupies residues 157–178 (AVFMVVFQSIVGCIIDAFIIGA). The Cytoplasmic segment spans residues 179–427 (VMAKMAKPKK…PRPLRRESEI (249 aa)). Positions 181–208 (AKMAKPKKRNETLVFSHNAVIAMRDGKL) are polyphosphoinositide (PIP2)-binding. Residues 384–427 (SKEEDDSENGVPESTSTDTPPDIDLHNQASVPLEPRPLRRESEI) are disordered. Residues 425–427 (SEI) carry the PDZ-binding motif.

This sequence belongs to the inward rectifier-type potassium channel (TC 1.A.2.1) family. KCNJ2 subfamily. As to quaternary structure, homotetramer. Homomultimeric and heteromultimeric association with KCNJ4/Kir2.3. Can form heteromeric channels with Kir2.6/KCNJ18. Associates, via its PDZ-recognition domain, with a complex containing LIN7A, LIN7B, LIN7C, DLG1, CASK and APBA1. S-nitrosylation increases the open probability and inward rectifying currents.

The protein localises to the cell membrane. It localises to the sarcolemma. The protein resides in the T-tubule. The catalysed reaction is K(+)(in) = K(+)(out). With respect to regulation, activated by phosphatidylinositol 4,5 biphosphate (PtdIns(4,5)P2). Functionally, inward rectifier potassium channels are characterized by a greater tendency to allow potassium to flow into the cell rather than out of it. Their voltage dependence is regulated by the concentration of extracellular potassium; as external potassium is raised, the voltage range of the channel opening shifts to more positive voltages. The inward rectification is mainly due to the blockage of outward current by internal magnesium. Blocked by external barium or cesium. Probably participates in establishing action potential waveform and excitability of neuronal and muscle tissues. This Cavia porcellus (Guinea pig) protein is Inward rectifier potassium channel 2 (KCNJ2).